The primary structure comprises 831 residues: Periplasmic nitrate reductase (831 aa).

The tat-type signal signal peptide spans M1–A29. One can recognise a 4Fe-4S Mo/W bis-MGD-type domain in the interval L41–D97. The [4Fe-4S] cluster site is built by C48, C51, C55, and C83. Residues K85, Q152, N177, C181, W214–M221, S245–H249, Q264–D266, M375, Q379, N485, S511–D512, K534, D561, and T721–S730 each bind Mo-bis(molybdopterin guanine dinucleotide). Residue W797 participates in substrate binding. Mo-bis(molybdopterin guanine dinucleotide) is bound by residues N805 and K822.

The protein belongs to the prokaryotic molybdopterin-containing oxidoreductase family. NasA/NapA/NarB subfamily. In terms of assembly, component of the periplasmic nitrate reductase NapAB complex composed of NapA and NapB. The cofactor is [4Fe-4S] cluster. Mo-bis(molybdopterin guanine dinucleotide) is required as a cofactor. Predicted to be exported by the Tat system. The position of the signal peptide cleavage has been experimentally proven.

The protein localises to the periplasm. It carries out the reaction 2 Fe(II)-[cytochrome] + nitrate + 2 H(+) = 2 Fe(III)-[cytochrome] + nitrite + H2O. Catalytic subunit of the periplasmic nitrate reductase complex NapAB. Receives electrons from NapB and catalyzes the reduction of nitrate to nitrite. In Cupriavidus necator (strain ATCC 17699 / DSM 428 / KCTC 22496 / NCIMB 10442 / H16 / Stanier 337) (Ralstonia eutropha), this protein is Periplasmic nitrate reductase.